A 345-amino-acid chain; its full sequence is Heat-inducible transcription repressor HrcA (345 aa).

This sequence belongs to the HrcA family.

Negative regulator of class I heat shock genes (grpE-dnaK-dnaJ and groELS operons). Prevents heat-shock induction of these operons. The polypeptide is Heat-inducible transcription repressor HrcA (Listeria welshimeri serovar 6b (strain ATCC 35897 / DSM 20650 / CCUG 15529 / CIP 8149 / NCTC 11857 / SLCC 5334 / V8)).